A 272-amino-acid polypeptide reads, in one-letter code: Transcription factor PU.1 (272 aa).

The interval 126–165 is disordered; the sequence is SPAHQQSSDEEEGERQSPPLEVSDGEADGLEPGPGLLHGE. Residues S142 and S148 each carry the phosphoserine modification. Low complexity predominate over residues 155–165; it reads LEPGPGLLHGE. Positions 172 to 255 form a DNA-binding region, ETS; the sequence is IRLYQFLLDL…VKKKLTYQFS (84 aa). Residues K219, R232, R235, and K245 each contribute to the DNA site.

The protein belongs to the ETS family. In terms of assembly, binds DNA as a monomer. Can form homomers. Directly interacts with CEBPD/NF-IL6-beta; this interaction does not affect DNA-binding properties of each partner. Interacts with NONO/p54(nrb). Interacts with RUNX1/AML1. Interacts with GFI1; the interaction represses SPI1 transcriptional activity, hence blocks SPI1-induced macrophage differentiation of myeloid progenitor cells. Interacts with CEBPE. Interacts with IRF4/Pip and IRF8. Interacts with JUN. Interacts with RB1. Interacts with TBP. As to expression, expressed in spleen, thymus and bone-marrow macrophages.

It is found in the nucleus. With respect to regulation, transcriptional activity at macrophage-specific genes is inhibited by interaction with GFI1, which results in inhibition of SPI1-induced macrophage differentiation of myeloid progenitor cells, but not that of the granulocyte lineage. In terms of biological role, pioneer transcription factor, which controls hematopoietic cell fate by decompacting stem cell heterochromatin and allowing other transcription factors to enter otherwise inaccessible genomic sites. Once in open chromatin, can directly control gene expression by binding genetic regulatory elements and can also more broadly influence transcription by recruiting transcription factors, such as interferon regulatory factors (IRFs), to otherwise inaccessible genomic regions. Transcriptionally activates genes important for myeloid and lymphoid lineages, such as CSF1R. Transcriptional activation from certain promoters, possibly containing low affinity binding sites, is achieved cooperatively with other transcription factors. FCER1A transactivation is achieved in cooperation with GATA1. May be particularly important for the pro- to pre-B cell transition. Binds (via the ETS domain) onto the purine-rich DNA core sequence 5'-GAGGAA-3', also known as the PU-box. In vitro can bind RNA and interfere with pre-mRNA splicing. This chain is Transcription factor PU.1 (Spi1), found in Mus musculus (Mouse).